Consider the following 347-residue polypeptide: NADH-ubiquinone oxidoreductase chain 2 (347 aa).

The next 10 helical transmembrane spans lie at 3-23 (PIIL…TMIS), 25-45 (HWLL…PILM), 59-79 (YFLT…INTA), 96-116 (LVTM…FWVP), 127-147 (GMLL…QIFP), 150-170 (NPNI…WGGL), 193-213 (ILMY…MLTI), 240-260 (ITLT…LTGF), 274-294 (SNIM…YFYM), and 323-343 (IFLL…SPAL).

It belongs to the complex I subunit 2 family. In terms of assembly, core subunit of respiratory chain NADH dehydrogenase (Complex I) which is composed of 45 different subunits. Interacts with TMEM242.

Its subcellular location is the mitochondrion inner membrane. The catalysed reaction is a ubiquinone + NADH + 5 H(+)(in) = a ubiquinol + NAD(+) + 4 H(+)(out). Core subunit of the mitochondrial membrane respiratory chain NADH dehydrogenase (Complex I) which catalyzes electron transfer from NADH through the respiratory chain, using ubiquinone as an electron acceptor. Essential for the catalytic activity and assembly of complex I. This is NADH-ubiquinone oxidoreductase chain 2 from Lemur catta (Ring-tailed lemur).